We begin with the raw amino-acid sequence, 261 residues long: Cytochrome c oxidase subunit 3 (261 aa).

Residues methionine 1–proline 15 are Mitochondrial matrix-facing. The helical transmembrane segment at tryptophan 16–tryptophan 34 threads the bilayer. The Mitochondrial intermembrane segment spans residues phenylalanine 35–threonine 40. A helical membrane pass occupies residues threonine 41–threonine 66. At phenylalanine 67–threonine 72 the chain is on the mitochondrial matrix side. The chain crosses the membrane as a helical span at residues proline 73–serine 105. Residues leucine 106–glutamate 128 are Mitochondrial intermembrane-facing. The helical transmembrane segment at valine 129 to methionine 152 threads the bilayer. The Mitochondrial matrix segment spans residues glutamate 153–glutamate 155. A helical membrane pass occupies residues arginine 156–glutamate 183. Residues alanine 184 to aspartate 190 are Mitochondrial intermembrane-facing. A helical membrane pass occupies residues glycine 191 to isoleucine 223. Residues glutamine 224–histidine 232 lie on the Mitochondrial matrix side of the membrane. A helical transmembrane segment spans residues phenylalanine 233–isoleucine 256. At tyrosine 257 to serine 261 the chain is on the mitochondrial intermembrane side.

This sequence belongs to the cytochrome c oxidase subunit 3 family. As to quaternary structure, component of the cytochrome c oxidase (complex IV, CIV), a multisubunit enzyme composed of 14 subunits. The complex is composed of a catalytic core of 3 subunits MT-CO1, MT-CO2 and MT-CO3, encoded in the mitochondrial DNA, and 11 supernumerary subunits COX4I, COX5A, COX5B, COX6A, COX6B, COX6C, COX7A, COX7B, COX7C, COX8 and NDUFA4, which are encoded in the nuclear genome. The complex exists as a monomer or a dimer and forms supercomplexes (SCs) in the inner mitochondrial membrane with NADH-ubiquinone oxidoreductase (complex I, CI) and ubiquinol-cytochrome c oxidoreductase (cytochrome b-c1 complex, complex III, CIII), resulting in different assemblies (supercomplex SCI(1)III(2)IV(1) and megacomplex MCI(2)III(2)IV(2)).

Its subcellular location is the mitochondrion inner membrane. The enzyme catalyses 4 Fe(II)-[cytochrome c] + O2 + 8 H(+)(in) = 4 Fe(III)-[cytochrome c] + 2 H2O + 4 H(+)(out). Its function is as follows. Component of the cytochrome c oxidase, the last enzyme in the mitochondrial electron transport chain which drives oxidative phosphorylation. The respiratory chain contains 3 multisubunit complexes succinate dehydrogenase (complex II, CII), ubiquinol-cytochrome c oxidoreductase (cytochrome b-c1 complex, complex III, CIII) and cytochrome c oxidase (complex IV, CIV), that cooperate to transfer electrons derived from NADH and succinate to molecular oxygen, creating an electrochemical gradient over the inner membrane that drives transmembrane transport and the ATP synthase. Cytochrome c oxidase is the component of the respiratory chain that catalyzes the reduction of oxygen to water. Electrons originating from reduced cytochrome c in the intermembrane space (IMS) are transferred via the dinuclear copper A center (CU(A)) of subunit 2 and heme A of subunit 1 to the active site in subunit 1, a binuclear center (BNC) formed by heme A3 and copper B (CU(B)). The BNC reduces molecular oxygen to 2 water molecules using 4 electrons from cytochrome c in the IMS and 4 protons from the mitochondrial matrix. The chain is Cytochrome c oxidase subunit 3 (mt-co3) from Carassius auratus (Goldfish).